The chain runs to 256 residues: Pimeloyl-[acyl-carrier protein] methyl ester esterase (256 aa).

One can recognise an AB hydrolase-1 domain in the interval 15 to 242 (HLVLLHGWGL…AAHAPFISHP (228 aa)). Substrate contacts are provided by residues Trp22, 82–83 (SL), and 143–147 (FLALQ). The active-site Nucleophile is Ser82. Active-site residues include Asp207 and His235. His235 serves as a coordination point for substrate.

It belongs to the AB hydrolase superfamily. Carboxylesterase BioH family. In terms of assembly, monomer.

Its subcellular location is the cytoplasm. It carries out the reaction 6-carboxyhexanoyl-[ACP] methyl ester + H2O = 6-carboxyhexanoyl-[ACP] + methanol + H(+). Its pathway is cofactor biosynthesis; biotin biosynthesis. The physiological role of BioH is to remove the methyl group introduced by BioC when the pimeloyl moiety is complete. It allows to synthesize pimeloyl-ACP via the fatty acid synthetic pathway through the hydrolysis of the ester bonds of pimeloyl-ACP esters. In Escherichia coli O127:H6 (strain E2348/69 / EPEC), this protein is Pimeloyl-[acyl-carrier protein] methyl ester esterase.